Reading from the N-terminus, the 365-residue chain is 4-hydroxy-3-methylbut-2-en-1-yl diphosphate synthase (flavodoxin) (365 aa).

Residues cysteine 270, cysteine 273, cysteine 305, and glutamate 312 each coordinate [4Fe-4S] cluster.

Belongs to the IspG family. [4Fe-4S] cluster serves as cofactor.

It carries out the reaction (2E)-4-hydroxy-3-methylbut-2-enyl diphosphate + 2 oxidized [2Fe-2S]-[ferredoxin] + H2O = 2-C-methyl-D-erythritol 2,4-cyclic diphosphate + 2 reduced [2Fe-2S]-[ferredoxin] + H(+). The catalysed reaction is (2E)-4-hydroxy-3-methylbut-2-enyl diphosphate + oxidized [flavodoxin] + H2O + 2 H(+) = 2-C-methyl-D-erythritol 2,4-cyclic diphosphate + reduced [flavodoxin]. Its pathway is isoprenoid biosynthesis; isopentenyl diphosphate biosynthesis via DXP pathway; isopentenyl diphosphate from 1-deoxy-D-xylulose 5-phosphate: step 5/6. Its function is as follows. Converts 2C-methyl-D-erythritol 2,4-cyclodiphosphate (ME-2,4cPP) into 1-hydroxy-2-methyl-2-(E)-butenyl 4-diphosphate. Involved in density-dependent regulation of 2'-N-acetyltransferase. This chain is 4-hydroxy-3-methylbut-2-en-1-yl diphosphate synthase (flavodoxin), found in Providencia stuartii.